Here is a 155-residue protein sequence, read N- to C-terminus: MMSLTFMAGLIFPVFMMLKGINPMSLLLALLTLSLCAVLWLGSFMSSWYAYILFIVYIGGILVLFIYVCMISSNYIASQHMYKSLLYAWGAVMLMSLTMETDTFIILGSNMMYTSVNIPMTILIFLSIYLLIVFFAVVNLMVNMTSILMVESSQV.

4 helical membrane-spanning segments follow: residues 24 to 44, 51 to 71, 88 to 108, and 118 to 138; these read MSLL…LGSF, YILF…VCMI, AWGA…IILG, and IPMT…FAVV.

This sequence belongs to the complex I subunit 6 family.

The protein localises to the mitochondrion membrane. The catalysed reaction is a ubiquinone + NADH + 5 H(+)(in) = a ubiquinol + NAD(+) + 4 H(+)(out). Core subunit of the mitochondrial membrane respiratory chain NADH dehydrogenase (Complex I) that is believed to belong to the minimal assembly required for catalysis. Complex I functions in the transfer of electrons from NADH to the respiratory chain. The immediate electron acceptor for the enzyme is believed to be ubiquinone. The sequence is that of NADH-ubiquinone oxidoreductase chain 6 (ND6) from Albinaria caerulea (Land snail).